A 325-amino-acid chain; its full sequence is Elongation factor P--(R)-beta-lysine ligase (325 aa).

Position 76–78 (76–78 (SPE)) interacts with substrate. ATP-binding positions include 100 to 102 (RNE) and Asn109. Tyr118 lines the substrate pocket. ATP is bound at residue 244–245 (EL). Glu251 contacts substrate. Gly300 contacts ATP.

Belongs to the class-II aminoacyl-tRNA synthetase family. EpmA subfamily. As to quaternary structure, homodimer.

The enzyme catalyses D-beta-lysine + L-lysyl-[protein] + ATP = N(6)-((3R)-3,6-diaminohexanoyl)-L-lysyl-[protein] + AMP + diphosphate + H(+). In terms of biological role, with EpmB is involved in the beta-lysylation step of the post-translational modification of translation elongation factor P (EF-P) on 'Lys-34'. Catalyzes the ATP-dependent activation of (R)-beta-lysine produced by EpmB, forming a lysyl-adenylate, from which the beta-lysyl moiety is then transferred to the epsilon-amino group of EF-P 'Lys-34'. This is Elongation factor P--(R)-beta-lysine ligase from Salmonella arizonae (strain ATCC BAA-731 / CDC346-86 / RSK2980).